The sequence spans 84 residues: Cell division topological specificity factor (84 aa).

Belongs to the MinE family.

Functionally, prevents the cell division inhibition by proteins MinC and MinD at internal division sites while permitting inhibition at polar sites. This ensures cell division at the proper site by restricting the formation of a division septum at the midpoint of the long axis of the cell. This Pseudomonas fluorescens (strain SBW25) protein is Cell division topological specificity factor.